The primary structure comprises 318 residues: tRNA uridine(34) hydroxylase (318 aa).

Residues 123 to 217 (EDDDTVIIDA…YGKDPETKGQ (95 aa)) form the Rhodanese domain. Residue cysteine 177 is the Cysteine persulfide intermediate of the active site.

The protein belongs to the TrhO family.

It carries out the reaction uridine(34) in tRNA + AH2 + O2 = 5-hydroxyuridine(34) in tRNA + A + H2O. Its function is as follows. Catalyzes oxygen-dependent 5-hydroxyuridine (ho5U) modification at position 34 in tRNAs. This is tRNA uridine(34) hydroxylase from Staphylococcus aureus (strain bovine RF122 / ET3-1).